Consider the following 366-residue polypeptide: Anhydro-N-acetylmuramic acid kinase (366 aa).

10 to 17 (GTSMDGID) lines the ATP pocket.

It belongs to the anhydro-N-acetylmuramic acid kinase family.

It catalyses the reaction 1,6-anhydro-N-acetyl-beta-muramate + ATP + H2O = N-acetyl-D-muramate 6-phosphate + ADP + H(+). It participates in amino-sugar metabolism; 1,6-anhydro-N-acetylmuramate degradation. Its pathway is cell wall biogenesis; peptidoglycan recycling. In terms of biological role, catalyzes the specific phosphorylation of 1,6-anhydro-N-acetylmuramic acid (anhMurNAc) with the simultaneous cleavage of the 1,6-anhydro ring, generating MurNAc-6-P. Is required for the utilization of anhMurNAc either imported from the medium or derived from its own cell wall murein, and thus plays a role in cell wall recycling. This chain is Anhydro-N-acetylmuramic acid kinase, found in Legionella pneumophila (strain Paris).